We begin with the raw amino-acid sequence, 638 residues long: Acetolactate synthase 2, chloroplastic (638 aa).

The N-terminal 39 residues, 1–39 (MATAATAAAALTGATTATPKSRRRAHHLATRRALAAPIR), are a transit peptide targeting the chloroplast. Residues 44–67 (SRATPTAPPATPLRPWGPNEPRKG) are disordered. Thiamine diphosphate is bound at residue glutamate 112. A disulfide bond links cysteine 132 and cysteine 278. Residues arginine 214, 320 to 341 (HGTV…FGVR), and 363 to 382 (DIDP…ICAD) contribute to the FAD site. The interval 455–535 (QHQMWAAQYY…VKVFVLNNQH (81 aa)) is thiamine pyrophosphate binding. 2 residues coordinate Mg(2+): aspartate 506 and asparagine 533.

The protein belongs to the TPP enzyme family. Requires Mg(2+) as cofactor. Thiamine diphosphate serves as cofactor.

The protein resides in the plastid. It is found in the chloroplast. The enzyme catalyses 2 pyruvate + H(+) = (2S)-2-acetolactate + CO2. Its pathway is amino-acid biosynthesis; L-isoleucine biosynthesis; L-isoleucine from 2-oxobutanoate: step 1/4. It functions in the pathway amino-acid biosynthesis; L-valine biosynthesis; L-valine from pyruvate: step 1/4. This is Acetolactate synthase 2, chloroplastic (ALS2) from Zea mays (Maize).